Here is a 419-residue protein sequence, read N- to C-terminus: UDP-N-acetylglucosamine 1-carboxyvinyltransferase (419 aa).

22–23 is a binding site for phosphoenolpyruvate; it reads KN. A UDP-N-acetyl-alpha-D-glucosamine-binding site is contributed by arginine 95. Cysteine 119 acts as the Proton donor in catalysis. Residue cysteine 119 is modified to 2-(S-cysteinyl)pyruvic acid O-phosphothioketal. UDP-N-acetyl-alpha-D-glucosamine is bound by residues 164 to 167, aspartate 308, and isoleucine 330; that span reads KVSV.

The protein belongs to the EPSP synthase family. MurA subfamily.

It localises to the cytoplasm. It catalyses the reaction phosphoenolpyruvate + UDP-N-acetyl-alpha-D-glucosamine = UDP-N-acetyl-3-O-(1-carboxyvinyl)-alpha-D-glucosamine + phosphate. The protein operates within cell wall biogenesis; peptidoglycan biosynthesis. In terms of biological role, cell wall formation. Adds enolpyruvyl to UDP-N-acetylglucosamine. The protein is UDP-N-acetylglucosamine 1-carboxyvinyltransferase of Rickettsia rickettsii (strain Iowa).